Reading from the N-terminus, the 594-residue chain is NADH-ubiquinone oxidoreductase chain 5 (594 aa).

15 helical membrane passes run 1-21, 43-63, 87-107, 114-134, 137-157, 171-191, 211-233, 241-261, 272-292, 301-320, 325-347, 366-386, 409-429, 457-477, and 486-506; these read MNLF…PIMM, AFLI…EMII, IVFA…SMWY, INQF…LVTA, LFQL…LIGW, AILY…WFLS, LPLM…HPWL, TPVS…FLLI, LMQT…AMCA, IIAF…IGIN, AFLH…GSII, MPFT…VPFL, LLIT…IIFF, LMAG…PMTT, and LKMT…EITL.

Belongs to the complex I subunit 5 family. Core subunit of respiratory chain NADH dehydrogenase (Complex I) which is composed of 45 different subunits.

It localises to the mitochondrion inner membrane. It carries out the reaction a ubiquinone + NADH + 5 H(+)(in) = a ubiquinol + NAD(+) + 4 H(+)(out). Its function is as follows. Core subunit of the mitochondrial membrane respiratory chain NADH dehydrogenase (Complex I) which catalyzes electron transfer from NADH through the respiratory chain, using ubiquinone as an electron acceptor. Essential for the catalytic activity and assembly of complex I. The sequence is that of NADH-ubiquinone oxidoreductase chain 5 (MT-ND5) from Hippopotamus amphibius (Hippopotamus).